We begin with the raw amino-acid sequence, 328 residues long: dITP/XTP pyrophosphatase (328 aa).

Positions 1 to 129 (MSEKIYEYKD…ATSEQGFGDT (129 aa)) are unknown. An NTP pyrophosphatase region spans residues 130 to 324 (ILIATRNEGK…KLMEVFPAWQ (195 aa)). 134–139 (TRNEGK) is a substrate binding site. The active-site Proton acceptor is the D196. Position 196 (D196) interacts with Mg(2+). Substrate contacts are provided by residues S197, 280-283 (FGYD), K303, and 308-309 (HR).

It belongs to the HAM1 NTPase family. As to quaternary structure, homodimer. Mg(2+) is required as a cofactor.

It catalyses the reaction XTP + H2O = XMP + diphosphate + H(+). The enzyme catalyses dITP + H2O = dIMP + diphosphate + H(+). The catalysed reaction is ITP + H2O = IMP + diphosphate + H(+). Its function is as follows. Pyrophosphatase that catalyzes the hydrolysis of nucleoside triphosphates to their monophosphate derivatives, with a high preference for the non-canonical purine nucleotides XTP (xanthosine triphosphate), dITP (deoxyinosine triphosphate) and ITP. Seems to function as a house-cleaning enzyme that removes non-canonical purine nucleotides from the nucleotide pool, thus preventing their incorporation into DNA/RNA and avoiding chromosomal lesions. This Streptococcus pyogenes serotype M6 (strain ATCC BAA-946 / MGAS10394) protein is dITP/XTP pyrophosphatase.